We begin with the raw amino-acid sequence, 265 residues long: Urease accessory protein UreH (265 aa).

Belongs to the UreD family. As to quaternary structure, ureH, UreF and UreG form a complex that acts as a GTP-hydrolysis-dependent molecular chaperone, activating the urease apoprotein by helping to assemble the nickel containing metallocenter of UreC. The UreE protein probably delivers the nickel.

It is found in the cytoplasm. In terms of biological role, required for maturation of urease via the functional incorporation of the urease nickel metallocenter. The polypeptide is Urease accessory protein UreH (Helicobacter pylori (strain J99 / ATCC 700824) (Campylobacter pylori J99)).